We begin with the raw amino-acid sequence, 96 residues long: MLFHVKMTVKLPVDMDPQQAERLKAEEKEMAQRLQREGSWRHLWRIAGHYANYSLFDLPSVEALHDTLTRLPLFPYMDIEIDGLCRHPSSIHADDR.

This sequence belongs to the muconolactone Delta-isomerase family. Homodecamer.

The enzyme catalyses (S)-muconolactone = (4,5-dihydro-5-oxofuran-2-yl)-acetate. The protein operates within aromatic compound metabolism; beta-ketoadipate pathway; 5-oxo-4,5-dihydro-2-furylacetate from catechol: step 3/3. This Pseudomonas aeruginosa (strain ATCC 15692 / DSM 22644 / CIP 104116 / JCM 14847 / LMG 12228 / 1C / PRS 101 / PAO1) protein is Muconolactone Delta-isomerase (catC).